We begin with the raw amino-acid sequence, 131 residues long: Small ribosomal subunit protein uS8 (131 aa).

The protein belongs to the universal ribosomal protein uS8 family. Part of the 30S ribosomal subunit. Contacts proteins S5 and S12.

In terms of biological role, one of the primary rRNA binding proteins, it binds directly to 16S rRNA central domain where it helps coordinate assembly of the platform of the 30S subunit. The sequence is that of Small ribosomal subunit protein uS8 from Azobacteroides pseudotrichonymphae genomovar. CFP2.